The primary structure comprises 139 residues: Serpin-like protein HMSD (139 aa).

The N-terminal stretch at 1-20 (MSISSALAMVFMGAKGNTAA) is a signal peptide. N-linked (GlcNAc...) asparagine glycosylation is present at Asn50.

It belongs to the serpin family. In terms of tissue distribution, highly expressed in dendritic cells and primary leukemia cells, especially those of myeloid lineage.

It is found in the secreted. Functionally, putative serine protease inhibitor. This Homo sapiens (Human) protein is Serpin-like protein HMSD (HMSD).